Reading from the N-terminus, the 118-residue chain is Large ribosomal subunit protein uL22 (118 aa).

This sequence belongs to the universal ribosomal protein uL22 family. As to quaternary structure, part of the 50S ribosomal subunit.

In terms of biological role, this protein binds specifically to 23S rRNA; its binding is stimulated by other ribosomal proteins, e.g. L4, L17, and L20. It is important during the early stages of 50S assembly. It makes multiple contacts with different domains of the 23S rRNA in the assembled 50S subunit and ribosome. The globular domain of the protein is located near the polypeptide exit tunnel on the outside of the subunit, while an extended beta-hairpin is found that lines the wall of the exit tunnel in the center of the 70S ribosome. This chain is Large ribosomal subunit protein uL22, found in Synechococcus sp. (strain RCC307).